Consider the following 192-residue polypeptide: Large ribosomal subunit protein uL3 (192 aa).

Belongs to the universal ribosomal protein uL3 family. As to quaternary structure, part of the 50S ribosomal subunit. Forms a cluster with proteins L14 and L19.

Functionally, one of the primary rRNA binding proteins, it binds directly near the 3'-end of the 23S rRNA, where it nucleates assembly of the 50S subunit. The polypeptide is Large ribosomal subunit protein uL3 (rplC) (Wolinella succinogenes (strain ATCC 29543 / DSM 1740 / CCUG 13145 / JCM 31913 / LMG 7466 / NCTC 11488 / FDC 602W) (Vibrio succinogenes)).